The chain runs to 331 residues: MASLKDVARLAGVSMMTVSRVMHNAESVRPATRDRVLQAIQTLNYVPDLSARKMRAQGRKPSTLAVLAQDTATTPFSVDILLAIEQTASEFGWNSFLINIFSEDDAARAARQLLAHRPDGIIYTTMGLRHITLPESLYGENIVLANCVADDPALPSYIPDDYTAQYESTQHLLAAGYRQPLCFWLPESALATGYRRQGFEQAWRDAGRDLAEVKQFHMATGDDHYTDLASLLNAHFKSGKPDFDVLICGNDRAAFVAYQVLLAKGVRIPQDVAVMGFDNLVGVGHLFLPPLTTIQLPHDIIGREAALHIIEGREGGRVTRIPCPLLIRCST.

In terms of domain architecture, HTH lacI-type spans 1 to 56 (MASLKDVARLAGVSMMTVSRVMHNAESVRPATRDRVLQAIQTLNYVPDLSARKMRA). The segment at residues 4–23 (LKDVARLAGVSMMTVSRVMH) is a DNA-binding region (H-T-H motif).

In terms of biological role, repressor for the csc operon. Binds D-fructose as an inducer. In Escherichia coli, this protein is Sucrose operon repressor (cscR).